A 338-amino-acid chain; its full sequence is uncharacterized protein (338 aa).

A signal peptide spans 1–29 (MIKQLYKNITICSLAISTALTVFPATSYA).

It belongs to the aerolysin family.

This is an uncharacterized protein from Staphylococcus aureus (strain Mu50 / ATCC 700699).